We begin with the raw amino-acid sequence, 147 residues long: Spermidine export protein MdtJ (147 aa).

A run of 4 helical transmembrane segments spans residues 1–21 (MIYWIFLGLAIIAEIIGTLSM), 31–51 (TGHIVMYFMITGSYVMLSLAV), 54–74 (VALGVAYALWEGIGILIITIF), and 81–101 (ETLSPLKIAGLVTLIGGILLV). Basic residues predominate over residues 105–117 (TRKPKQPNRHRGN). Positions 105 to 147 (TRKPKQPNRHRGNRPPSVQGLKTQTTGHHKGVAVESGEHHAAA) are disordered.

It belongs to the drug/metabolite transporter (DMT) superfamily. Small multidrug resistance (SMR) (TC 2.A.7.1) family. MdtJ subfamily. As to quaternary structure, forms a complex with MdtI.

The protein resides in the cell inner membrane. Functionally, catalyzes the excretion of spermidine. The protein is Spermidine export protein MdtJ of Yersinia pseudotuberculosis serotype O:3 (strain YPIII).